The sequence spans 600 residues: Methionine--tRNA ligase (600 aa).

The 'HIGH' region signature appears at 11 to 21 (PYANGPRHIGH). Cys143, Cys146, Cys156, and Cys159 together coordinate Zn(2+). The short motif at 350 to 354 (QFSSS) is the 'KMSKS' region element. Ser353 is an ATP binding site.

Belongs to the class-I aminoacyl-tRNA synthetase family. MetG type 1 subfamily. In terms of assembly, monomer. Zn(2+) serves as cofactor.

The protein localises to the cytoplasm. It catalyses the reaction tRNA(Met) + L-methionine + ATP = L-methionyl-tRNA(Met) + AMP + diphosphate. Its function is as follows. Is required not only for elongation of protein synthesis but also for the initiation of all mRNA translation through initiator tRNA(fMet) aminoacylation. This Kineococcus radiotolerans (strain ATCC BAA-149 / DSM 14245 / SRS30216) protein is Methionine--tRNA ligase.